A 165-amino-acid chain; its full sequence is uncharacterized protein (165 aa).

A helical membrane pass occupies residues 10 to 27 (VSLTIVFVLFFSADVSLT).

The protein resides in the membrane. This is an uncharacterized protein from Saccharomyces cerevisiae (strain ATCC 204508 / S288c) (Baker's yeast).